Here is a 549-residue protein sequence, read N- to C-terminus: Oxygen-dependent choline dehydrogenase (549 aa).

4–33 (DYVIVGSGSAGSAIAYRLSEDGRYSVIVIE) provides a ligand contact to FAD. The active-site Proton acceptor is the His465. Residues 528–549 (KTPLPRSNQEPWVNPRAAVSDR) are disordered.

It belongs to the GMC oxidoreductase family. FAD is required as a cofactor.

The enzyme catalyses choline + A = betaine aldehyde + AH2. It carries out the reaction betaine aldehyde + NAD(+) + H2O = glycine betaine + NADH + 2 H(+). It participates in amine and polyamine biosynthesis; betaine biosynthesis via choline pathway; betaine aldehyde from choline (cytochrome c reductase route): step 1/1. Its function is as follows. Involved in the biosynthesis of the osmoprotectant glycine betaine. Catalyzes the oxidation of choline to betaine aldehyde and betaine aldehyde to glycine betaine at the same rate. This Agrobacterium fabrum (strain C58 / ATCC 33970) (Agrobacterium tumefaciens (strain C58)) protein is Oxygen-dependent choline dehydrogenase.